Here is a 157-residue protein sequence, read N- to C-terminus: Protein FAM162B (157 aa).

Residues 104–123 (ACYIMIGLTIVACFAVIVSA) form a helical membrane-spanning segment.

Belongs to the UPF0389 family.

It is found in the membrane. In Mus musculus (Mouse), this protein is Protein FAM162B (Fam162b).